The primary structure comprises 472 residues: Kynureninase 1 (472 aa).

Residues L146, T147, 174–177 (FPSD), S231, D260, H263, and Y285 contribute to the pyridoxal 5'-phosphate site. K286 carries the post-translational modification N6-(pyridoxal phosphate)lysine. Residues W326 and N354 each contribute to the pyridoxal 5'-phosphate site.

Belongs to the kynureninase family. In terms of assembly, homodimer. The cofactor is pyridoxal 5'-phosphate.

It is found in the cytoplasm. The catalysed reaction is L-kynurenine + H2O = anthranilate + L-alanine + H(+). The enzyme catalyses 3-hydroxy-L-kynurenine + H2O = 3-hydroxyanthranilate + L-alanine + H(+). It functions in the pathway amino-acid degradation; L-kynurenine degradation; L-alanine and anthranilate from L-kynurenine: step 1/1. The protein operates within cofactor biosynthesis; NAD(+) biosynthesis; quinolinate from L-kynurenine: step 2/3. Catalyzes the cleavage of L-kynurenine (L-Kyn) and L-3-hydroxykynurenine (L-3OHKyn) into anthranilic acid (AA) and 3-hydroxyanthranilic acid (3-OHAA), respectively. The protein is Kynureninase 1 (bna5-1) of Aspergillus niger (strain ATCC MYA-4892 / CBS 513.88 / FGSC A1513).